Consider the following 709-residue polypeptide: Glycerol kinase (709 aa).

A substrate-binding site is contributed by Thr56. Arg60 contributes to the ATP binding site. Residues 86–110 form a disordered region; it reads KIGVSGLRRPSTAPARETPNAGDIK. Residues Arg201, Tyr258, and Asp386 each contribute to the substrate site. Residues Thr408, Gly463, and 584-588 each bind ATP; that span reads GMSRS.

It belongs to the FGGY kinase family.

The catalysed reaction is glycerol + ATP = sn-glycerol 3-phosphate + ADP + H(+). It participates in polyol metabolism; glycerol degradation via glycerol kinase pathway; sn-glycerol 3-phosphate from glycerol: step 1/1. Key enzyme in the regulation of glycerol uptake and metabolism. Catalyzes the phosphorylation of glycerol to yield sn-glycerol 3-phosphate. The protein is Glycerol kinase (GUT1) of Saccharomyces cerevisiae (strain ATCC 204508 / S288c) (Baker's yeast).